We begin with the raw amino-acid sequence, 816 residues long: H(+)/Cl(-) exchange transporter 5 (816 aa).

Residues 1 to 124 are Cytoplasmic-facing; the sequence is MAMWQGAMDN…WALIHSVSDA (124 aa). 2 helical membrane-spanning segments follow: residues 125 to 162 and 208 to 231; these read FSGW…ICTG and VNYF…VKVF. The Selectivity filter part_1 motif lies at 237 to 241; it reads GSGIP. A chloride-binding site is contributed by serine 238. The segment at residues 240–247 is an intramembrane region (helical); that stretch reads IPEIKTIL. 2 helical membrane-spanning segments follow: residues 256–275 and 281–300; these read LGKW…VSSG and EGPL…HRFN. Residues 279–283 carry the Selectivity filter part_2 motif; sequence GKEGP. Intramembrane regions (helical) lie at residues 312–324 and 328–336; these read VLSA…VSVA and PIGGVLFSL. The next 5 helical transmembrane spans lie at 348-366, 389-414, 422-442, 498-518, and 523-542; these read LWRS…RSIN, LVPF…IAWC, LGKY…ILAF, MWQL…TFGM, and GLFI…LGVG. The short motif at 523–527 is the Selectivity filter part_3 element; sequence GLFIP. Phenylalanine 525 lines the chloride pocket. Positions 570-584 form an intramembrane region, helical; the sequence is GLYAMVGAAACLGGV. Residues 585-587 constitute an intramembrane region (note=Loop between two helices); that stretch reads TRM. An intramembrane region (helical) is located at residues 588-599; it reads TVSLVVIMFELT. The note=Loop between two helices intramembrane region spans 600-604; the sequence is GGLEY. Residues 605 to 622 traverse the membrane as a helical segment; it reads IVPLMAAAMTSKWVADAL. The Cytoplasmic portion of the chain corresponds to 623–816; it reads GREGIYDAHI…NQDPDSILFN (194 aa). Tyrosine 628 is a binding site for chloride. 2 CBS domains span residues 656-720 and 752-812; these read MKPR…ARKK and ILDL…DPDS. ATP is bound by residues threonine 666, 687–689, and 794–797; these read YSG and TKKD.

Belongs to the chloride channel (TC 2.A.49) family. ClC-5/CLCN5 subfamily. As to quaternary structure, interacts with NEDD4 and NEDD4L. Post-translationally, ubiquitinated by NEDD4L in the presence of albumin; which promotes endocytosis and proteasomal degradation.

It localises to the golgi apparatus membrane. It is found in the endosome membrane. Its subcellular location is the cell membrane. It carries out the reaction 2 chloride(in) + H(+)(out) = 2 chloride(out) + H(+)(in). Functionally, proton-coupled chloride transporter. Functions as antiport system and exchanges chloride ions against protons. Important for normal acidification of the endosome lumen. May play an important role in renal tubular function. The CLC channel family contains both chloride channels and proton-coupled anion transporters that exchange chloride or another anion for protons. The absence of conserved gating glutamate residues is typical for family members that function as channels. The protein is H(+)/Cl(-) exchange transporter 5 (CLCN5) of Oryctolagus cuniculus (Rabbit).